The primary structure comprises 466 residues: Signal recognition particle 54 kDa protein (466 aa).

GTP is bound by residues 104-111 (GLQGSGKT), 184-188 (DTAGR), and 242-245 (TKLD). The disordered stretch occupies residues 444–466 (MQQGGGGGGGGGGGLGGMGPFGD). A compositionally biased stretch (gly residues) spans 446-466 (QGGGGGGGGGGGLGGMGPFGD).

The protein belongs to the GTP-binding SRP family. SRP54 subfamily. As to quaternary structure, part of the signal recognition particle protein translocation system, which is composed of SRP and FtsY. Archaeal SRP consists of a 7S RNA molecule of 300 nucleotides and two protein subunits: SRP54 and SRP19.

The protein resides in the cytoplasm. The catalysed reaction is GTP + H2O = GDP + phosphate + H(+). In terms of biological role, involved in targeting and insertion of nascent membrane proteins into the cytoplasmic membrane. Binds to the hydrophobic signal sequence of the ribosome-nascent chain (RNC) as it emerges from the ribosomes. The SRP-RNC complex is then targeted to the cytoplasmic membrane where it interacts with the SRP receptor FtsY. This Natronomonas pharaonis (strain ATCC 35678 / DSM 2160 / CIP 103997 / JCM 8858 / NBRC 14720 / NCIMB 2260 / Gabara) (Halobacterium pharaonis) protein is Signal recognition particle 54 kDa protein.